Here is a 452-residue protein sequence, read N- to C-terminus: Probable cytosolic iron-sulfur protein assembly protein 1 (452 aa).

Residues Met-1–Ser-12 show a composition bias toward pro residues. A disordered region spans residues Met-1–Pro-24. 6 WD repeats span residues Gly-70–Ala-121, Gly-161–Asp-200, Glu-213–Cys-267, Gly-273–Val-319, Val-340–Ala-379, and Tyr-411–Ser-452.

This sequence belongs to the WD repeat CIA1 family.

Functionally, essential component of the cytosolic iron-sulfur (Fe/S) protein assembly machinery. Required for the maturation of extramitochondrial Fe/S proteins. This is Probable cytosolic iron-sulfur protein assembly protein 1 from Chaetomium globosum (strain ATCC 6205 / CBS 148.51 / DSM 1962 / NBRC 6347 / NRRL 1970) (Soil fungus).